A 246-amino-acid chain; its full sequence is UDP-N-acetyl-D-mannosaminuronic acid transferase (246 aa).

Belongs to the glycosyltransferase 26 family.

The catalysed reaction is UDP-N-acetyl-alpha-D-mannosaminouronate + N-acetyl-alpha-D-glucosaminyl-di-trans,octa-cis-undecaprenyl diphosphate = beta-D-ManNAcA-(1-&gt;4)-alpha-D-GlcNAc-di-trans,octa-cis-undecaprenyl diphosphate + UDP + H(+). It functions in the pathway bacterial outer membrane biogenesis; enterobacterial common antigen biosynthesis. Functionally, catalyzes the synthesis of Und-PP-GlcNAc-ManNAcA (Lipid II), the second lipid-linked intermediate involved in enterobacterial common antigen (ECA) synthesis. The protein is UDP-N-acetyl-D-mannosaminuronic acid transferase of Salmonella agona (strain SL483).